A 340-amino-acid chain; its full sequence is Phosphate acyltransferase (340 aa).

It belongs to the PlsX family. In terms of assembly, homodimer. Probably interacts with PlsY.

It localises to the cytoplasm. It carries out the reaction a fatty acyl-[ACP] + phosphate = an acyl phosphate + holo-[ACP]. Its pathway is lipid metabolism; phospholipid metabolism. In terms of biological role, catalyzes the reversible formation of acyl-phosphate (acyl-PO(4)) from acyl-[acyl-carrier-protein] (acyl-ACP). This enzyme utilizes acyl-ACP as fatty acyl donor, but not acyl-CoA. This Leptospira biflexa serovar Patoc (strain Patoc 1 / ATCC 23582 / Paris) protein is Phosphate acyltransferase.